Reading from the N-terminus, the 318-residue chain is GPN-loop GTPase 2 (318 aa).

Gly29–Thr34 is a binding site for GTP. Positions Gly85–Asn87 match the Gly-Pro-Asn (GPN)-loop; involved in dimer interface motif. Ser187–Asp190 contributes to the GTP binding site.

Belongs to the GPN-loop GTPase family. As to quaternary structure, heterodimers with gpn1 or gpn3. Binds to RNA polymerase II (RNAPII).

Its function is as follows. Small GTPase required for proper localization of RNA polymerase II and III (RNAPII and RNAPIII). May act at an RNAP assembly step prior to nuclear import. This is GPN-loop GTPase 2 from Xenopus laevis (African clawed frog).